Reading from the N-terminus, the 179-residue chain is UPF0398 protein SSU05_0416 (179 aa).

This sequence belongs to the UPF0398 family.

In Streptococcus suis (strain 05ZYH33), this protein is UPF0398 protein SSU05_0416.